The following is a 299-amino-acid chain: UDP-N-acetylenolpyruvoylglucosamine reductase (299 aa).

An FAD-binding PCMH-type domain is found at 31 to 192 (VGGVAEVVFK…VDATFVGACG (162 aa)). The active site involves arginine 172. Serine 221 serves as the catalytic Proton donor. Glutamate 291 is a catalytic residue.

Belongs to the MurB family. FAD serves as cofactor.

It is found in the cytoplasm. It carries out the reaction UDP-N-acetyl-alpha-D-muramate + NADP(+) = UDP-N-acetyl-3-O-(1-carboxyvinyl)-alpha-D-glucosamine + NADPH + H(+). Its pathway is cell wall biogenesis; peptidoglycan biosynthesis. In terms of biological role, cell wall formation. This Anaplasma marginale (strain St. Maries) protein is UDP-N-acetylenolpyruvoylglucosamine reductase.